The following is a 111-amino-acid chain: uncharacterized protein (111 aa).

3 helical membrane-spanning segments follow: residues 22 to 42 (ASLICLHTLSLVSFSFLANIT), 48 to 68 (LTPAGIIESIPVVFTAVVSVL), and 75 to 95 (VLVTVSVVLFKISLGAIPKIL).

The protein resides in the membrane. This is an uncharacterized protein from Saccharomyces cerevisiae (strain ATCC 204508 / S288c) (Baker's yeast).